The sequence spans 243 residues: Phosphoribosyl isomerase A (243 aa).

The Proton acceptor role is filled by Asp-9. The active-site Proton donor is Asp-128.

The protein belongs to the HisA/HisF family.

The protein localises to the cytoplasm. The enzyme catalyses 1-(5-phospho-beta-D-ribosyl)-5-[(5-phospho-beta-D-ribosylamino)methylideneamino]imidazole-4-carboxamide = 5-[(5-phospho-1-deoxy-D-ribulos-1-ylimino)methylamino]-1-(5-phospho-beta-D-ribosyl)imidazole-4-carboxamide. The catalysed reaction is N-(5-phospho-beta-D-ribosyl)anthranilate = 1-(2-carboxyphenylamino)-1-deoxy-D-ribulose 5-phosphate. It participates in amino-acid biosynthesis; L-histidine biosynthesis; L-histidine from 5-phospho-alpha-D-ribose 1-diphosphate: step 4/9. The protein operates within amino-acid biosynthesis; L-tryptophan biosynthesis; L-tryptophan from chorismate: step 3/5. Involved in both the histidine and tryptophan biosynthetic pathways. The polypeptide is Phosphoribosyl isomerase A (Mycolicibacterium paratuberculosis (strain ATCC BAA-968 / K-10) (Mycobacterium paratuberculosis)).